Consider the following 200-residue polypeptide: Outer-membrane lipoprotein carrier protein (200 aa).

The first 18 residues, methionine 1–alanine 18, serve as a signal peptide directing secretion.

Belongs to the LolA family. Monomer.

It is found in the periplasm. In terms of biological role, participates in the translocation of lipoproteins from the inner membrane to the outer membrane. Only forms a complex with a lipoprotein if the residue after the N-terminal Cys is not an aspartate (The Asp acts as a targeting signal to indicate that the lipoprotein should stay in the inner membrane). The sequence is that of Outer-membrane lipoprotein carrier protein from Photobacterium profundum (strain SS9).